We begin with the raw amino-acid sequence, 447 residues long: Trigger factor (447 aa).

The PPIase FKBP-type domain maps to 164-249 (GNQVTFDFEG…VKLVEKSKLP (86 aa)).

This sequence belongs to the FKBP-type PPIase family. Tig subfamily.

It is found in the cytoplasm. The enzyme catalyses [protein]-peptidylproline (omega=180) = [protein]-peptidylproline (omega=0). Its function is as follows. Involved in protein export. Acts as a chaperone by maintaining the newly synthesized protein in an open conformation. Functions as a peptidyl-prolyl cis-trans isomerase. The protein is Trigger factor of Psychrobacter arcticus (strain DSM 17307 / VKM B-2377 / 273-4).